Reading from the N-terminus, the 191-residue chain is MTNLQENLTALSADLAIFERKIQHLAKEMTIDLSHYEIDHLALRVNSEQSAKNWLILLLKCGRILSDNIVNGRKIYLIELEKPVKFANQFVDIIELPLPKNKKYPIEGWEHIEIVMPFLPKESINEWINRVNMYFLXLTQLTIKVSEPKVDGERLPNPSIAVSFTDKTVNHTCIKVHPYSIKKYLRFSKNE.

It to E.coli YecM.

This is an uncharacterized protein from Haemophilus influenzae (strain ATCC 51907 / DSM 11121 / KW20 / Rd).